Consider the following 228-residue polypeptide: RNA chaperone ProQ (228 aa).

The interval 105-178 is disordered; the sequence is EAKARVQAQR…REEQHTPVSD (74 aa). 2 stretches are compositionally biased toward basic and acidic residues: residues 117-136 and 146-173; these read QQAK…DAPR and RRKE…EEQH.

It belongs to the ProQ family.

It localises to the cytoplasm. Functionally, RNA chaperone with significant RNA binding, RNA strand exchange and RNA duplexing activities. May regulate ProP activity through an RNA-based, post-transcriptional mechanism. This Citrobacter koseri (strain ATCC BAA-895 / CDC 4225-83 / SGSC4696) protein is RNA chaperone ProQ.